The sequence spans 204 residues: Ancillary SecYEG translocon subunit (204 aa).

The Cytoplasmic portion of the chain corresponds to 1–23; that stretch reads MAYTIEEEQELTAIKAWWNENYK. Residues 24–44 form a helical membrane-spanning segment; that stretch reads FIIVCFVIAFGGVFGWNYWQS. The Periplasmic segment spans residues 45–204; that stretch reads HQIQKMHKAS…QLIQVRLNNL (160 aa).

It belongs to the YfgM family. In terms of assembly, interacts with the SecYEG translocon. Forms a complex with PpiD.

Its subcellular location is the cell inner membrane. May mediate protein transfer from the SecYEG translocon to the periplasmic chaperone network via its periplasmic C-terminal region. In Aggregatibacter actinomycetemcomitans (Actinobacillus actinomycetemcomitans), this protein is Ancillary SecYEG translocon subunit (1057).